A 224-amino-acid chain; its full sequence is ATP-dependent dethiobiotin synthetase BioD (224 aa).

ATP is bound at residue glycine 12–phenylalanine 17. Position 16 (threonine 16) interacts with Mg(2+). The active site involves lysine 37. Residue threonine 41 coordinates substrate. Position 107 (glutamate 107) interacts with Mg(2+). ATP is bound by residues glutamate 107 to glycine 110, glycine 167 to serine 168, proline 197 to glycine 199, and glutamate 204.

It belongs to the dethiobiotin synthetase family. Homodimer. It depends on Mg(2+) as a cofactor.

The protein localises to the cytoplasm. It catalyses the reaction (7R,8S)-7,8-diammoniononanoate + CO2 + ATP = (4R,5S)-dethiobiotin + ADP + phosphate + 3 H(+). It functions in the pathway cofactor biosynthesis; biotin biosynthesis; biotin from 7,8-diaminononanoate: step 1/2. Its function is as follows. Catalyzes a mechanistically unusual reaction, the ATP-dependent insertion of CO2 between the N7 and N8 nitrogen atoms of 7,8-diaminopelargonic acid (DAPA, also called 7,8-diammoniononanoate) to form a ureido ring. This chain is ATP-dependent dethiobiotin synthetase BioD, found in Corynebacterium glutamicum (strain R).